Reading from the N-terminus, the 577-residue chain is MEESHFNSNPYFWPSIPTVSGQIENTMFINKMKDQLLPEKGCGLAPPHYPTLLTVPASVSLPSGISMDTESKSDQLTPHSQASVTQNITVVPVPSTGLMTAGVSCSQRWRREGSQSRGPGLVITSPSGSLVTTASSAQTFPISAPMIVSALPPGSQALQVVPDLSKKVASTLTEEGGGGGGGGGSVAPKPPRGRKKKRMLESGLPEMNDPYVLSPEDDDDHQKDGKTYRCRMCSLTFYSKSEMQIHSKSHTETKPHKCPHCSKTFANSSYLAQHIRIHSGAKPYSCNFCEKSFRQLSHLQQHTRIHSKMHTETIKPHKCPHCSKTFANTSYLAQHLRIHSGAKPYNCSYCQKAFRQLSHLQQHTRIHTGDRPYKCAHPGCEKAFTQLSNLQSHRRQHNKDKPFKCHNCHRAYTDAASLEVHLSTHTVKHAKVYTCTICSRAYTSETYLMKHMRKHNPPDLQQQVQAAAAAAAVAQAQAQAQAQAQAQAQAQAQAQASQASQQQQQQQQQQQQQQQQPPPHFQSPGAAPQGGGGGDSNPNPPPQCSFDLTPYKTAEHHKDICLTVTTSTIQVEHLASS.

Residues 171 to 225 form a disordered region; the sequence is TLTEEGGGGGGGGGSVAPKPPRGRKKKRMLESGLPEMNDPYVLSPEDDDDHQKDG. The span at 175–185 shows a compositional bias: gly residues; the sequence is EGGGGGGGGGS. Ser214 is modified (phosphoserine). 8 C2H2-type zinc fingers span residues 228–250, 256–278, 284–306, 317–339, 345–367, 373–397, 403–425, and 433–455; these read YRCRMCSLTFYSKSEMQIHSKSH, HKCPHCSKTFANSSYLAQHIRIH, YSCNFCEKSFRQLSHLQQHTRIH, HKCPHCSKTFANTSYLAQHLRIH, YNCSYCQKAFRQLSHLQQHTRIH, YKCAHPGCEKAFTQLSNLQSHRRQH, FKCHNCHRAYTDAASLEVHLSTH, and YTCTICSRAYTSETYLMKHMRKH. Residues 501–515 are compositionally biased toward low complexity; sequence QQQQQQQQQQQQQQQ. Positions 501 to 550 are disordered; it reads QQQQQQQQQQQQQQQQPPPHFQSPGAAPQGGGGGDSNPNPPPQCSFDLTP.

It belongs to the krueppel C2H2-type zinc-finger protein family. Interacts with BCAR1.

Its subcellular location is the nucleus. In terms of biological role, transcription factor that binds the consensus DNA sequence [GC]AAAAA. Seems to bind and regulate the promoters of MMP1, MMP3, MMP7 and COL1A1. This is Zinc finger protein 384 (ZNF384) from Homo sapiens (Human).